The chain runs to 329 residues: GTP 3',8-cyclase (329 aa).

The Radical SAM core domain occupies 8–234 (AFARKFYYLR…QQRARSDGPA (227 aa)). R17 lines the GTP pocket. Residues C24 and C28 each coordinate [4Fe-4S] cluster. Y30 serves as a coordination point for S-adenosyl-L-methionine. Residue C31 participates in [4Fe-4S] cluster binding. Position 68 (R68) interacts with GTP. G72 serves as a coordination point for S-adenosyl-L-methionine. A GTP-binding site is contributed by T99. Residue S123 participates in S-adenosyl-L-methionine binding. A GTP-binding site is contributed by K160. M194 contacts S-adenosyl-L-methionine. [4Fe-4S] cluster is bound by residues C257 and C260. 262–264 (RLR) contributes to the GTP binding site. C274 provides a ligand contact to [4Fe-4S] cluster.

This sequence belongs to the radical SAM superfamily. MoaA family. As to quaternary structure, monomer and homodimer. It depends on [4Fe-4S] cluster as a cofactor.

The enzyme catalyses GTP + AH2 + S-adenosyl-L-methionine = (8S)-3',8-cyclo-7,8-dihydroguanosine 5'-triphosphate + 5'-deoxyadenosine + L-methionine + A + H(+). It functions in the pathway cofactor biosynthesis; molybdopterin biosynthesis. In terms of biological role, catalyzes the cyclization of GTP to (8S)-3',8-cyclo-7,8-dihydroguanosine 5'-triphosphate. In Pectobacterium atrosepticum (strain SCRI 1043 / ATCC BAA-672) (Erwinia carotovora subsp. atroseptica), this protein is GTP 3',8-cyclase.